A 125-amino-acid chain; its full sequence is Secreted RxLR effector protein 55 (125 aa).

Residues 1–21 (MAASRSSITTLLLLIVAVALG) form the signal peptide. The short motif at 35–38 (RQLR) is the RxLR element. The span at 51 to 87 (ESATSSSSSSALDHKSSAPGEATNASETEHSAASTAS) shows a compositional bias: low complexity. Residues 51–96 (ESATSSSSSSALDHKSSAPGEATNASETEHSAASTASEPKHEGPTM) form a disordered region. N-linked (GlcNAc...) asparagine glycosylation occurs at Asn-74. A helical transmembrane segment spans residues 99 to 119 (FVGPAAAGVLAILLIGAVIAF).

It belongs to the RxLR effector family.

It localises to the secreted. The protein resides in the host cell membrane. Functionally, effector that acts as a broad suppressor of cell death to interrupt plant immunity. Inhibits cell death induced by cell death-inducing proteins, including the PAMP elicitor INF1 from P.infestans. This is Secreted RxLR effector protein 55 from Plasmopara viticola (Downy mildew of grapevine).